The chain runs to 104 residues: Small ribosomal subunit protein uS10 (104 aa).

This sequence belongs to the universal ribosomal protein uS10 family. As to quaternary structure, part of the 30S ribosomal subunit.

Functionally, involved in the binding of tRNA to the ribosomes. This Variovorax paradoxus (strain S110) protein is Small ribosomal subunit protein uS10.